We begin with the raw amino-acid sequence, 333 residues long: Anthranilate phosphoribosyltransferase (333 aa).

5-phospho-alpha-D-ribose 1-diphosphate-binding positions include Gly80, 83-84 (GD), Thr88, 90-93 (NLST), 108-116 (KHGNRSASG), and Ser120. Gly80 lines the anthranilate pocket. Position 92 (Ser92) interacts with Mg(2+). Residue Asn111 participates in anthranilate binding. Arg166 lines the anthranilate pocket. Residues Asp224 and Glu225 each contribute to the Mg(2+) site.

This sequence belongs to the anthranilate phosphoribosyltransferase family. Homodimer. It depends on Mg(2+) as a cofactor.

It catalyses the reaction N-(5-phospho-beta-D-ribosyl)anthranilate + diphosphate = 5-phospho-alpha-D-ribose 1-diphosphate + anthranilate. Its pathway is amino-acid biosynthesis; L-tryptophan biosynthesis; L-tryptophan from chorismate: step 2/5. Functionally, catalyzes the transfer of the phosphoribosyl group of 5-phosphorylribose-1-pyrophosphate (PRPP) to anthranilate to yield N-(5'-phosphoribosyl)-anthranilate (PRA). In Pyrobaculum arsenaticum (strain DSM 13514 / JCM 11321 / PZ6), this protein is Anthranilate phosphoribosyltransferase.